The following is a 233-amino-acid chain: Large ribosomal subunit protein uL1 (233 aa).

Belongs to the universal ribosomal protein uL1 family. As to quaternary structure, part of the 50S ribosomal subunit.

Binds directly to 23S rRNA. The L1 stalk is quite mobile in the ribosome, and is involved in E site tRNA release. Its function is as follows. Protein L1 is also a translational repressor protein, it controls the translation of the L11 operon by binding to its mRNA. This Pelobacter propionicus (strain DSM 2379 / NBRC 103807 / OttBd1) protein is Large ribosomal subunit protein uL1.